The primary structure comprises 242 residues: Biosynthetic peptidoglycan transglycosylase (242 aa).

The helical transmembrane segment at 21–41 threads the bilayer; sequence VALVVFWGGGIALFSVVPVPF.

Belongs to the glycosyltransferase 51 family.

It is found in the cell inner membrane. It catalyses the reaction [GlcNAc-(1-&gt;4)-Mur2Ac(oyl-L-Ala-gamma-D-Glu-L-Lys-D-Ala-D-Ala)](n)-di-trans,octa-cis-undecaprenyl diphosphate + beta-D-GlcNAc-(1-&gt;4)-Mur2Ac(oyl-L-Ala-gamma-D-Glu-L-Lys-D-Ala-D-Ala)-di-trans,octa-cis-undecaprenyl diphosphate = [GlcNAc-(1-&gt;4)-Mur2Ac(oyl-L-Ala-gamma-D-Glu-L-Lys-D-Ala-D-Ala)](n+1)-di-trans,octa-cis-undecaprenyl diphosphate + di-trans,octa-cis-undecaprenyl diphosphate + H(+). The protein operates within cell wall biogenesis; peptidoglycan biosynthesis. Peptidoglycan polymerase that catalyzes glycan chain elongation from lipid-linked precursors. The sequence is that of Biosynthetic peptidoglycan transglycosylase from Salmonella arizonae (strain ATCC BAA-731 / CDC346-86 / RSK2980).